We begin with the raw amino-acid sequence, 2531 residues long: Putative neurobeachin homolog (2531 aa).

Acidic residues-rich tracts occupy residues 1–10, 26–35, and 62–74; these read MDISETEYND, EDEVNDEESN, and EPSD…EESE. 4 disordered regions span residues 1–101, 1363–1398, 1420–1440, and 1642–1670; these read MDIS…SPPP, NDGD…DNGG, EELK…MPPQ, and RFVP…EISE. The segment covering 1363-1379 has biased composition (basic and acidic residues); the sequence is NDGDHASIKNGSDHSEN. Residues 1427-1440 are compositionally biased toward polar residues; the sequence is QSNGRRPSTLMPPQ. Basic and acidic residues predominate over residues 1650 to 1670; it reads SRHEEANLPEGEKNEEPEISE. Residues 1714–1822 enclose the BEACH-type PH domain; that stretch reads PSSQSACFST…TVRKVVYQLP (109 aa). The BEACH domain maps to 1841–2130; sequence MTPRQLFKHS…QLLAEAHPPR (290 aa). WD repeat units lie at residues 2289–2332, 2350–2389, 2429–2468, and 2471–2510; these read GHGD…GFIA, GHEA…LRRI, LSEE…KLYT, and PLNS…WHYE.

The protein belongs to the WD repeat neurobeachin family. In terms of assembly, interacts with RII subunit of PKA.

It localises to the cytoplasm. The protein localises to the membrane. Its subcellular location is the nucleus. Functionally, binds to type II regulatory subunits of protein kinase A and anchors/targets them to the membrane. May anchor the kinase to cytoskeletal and/or organelle-associated proteins. Regulates endosomal traffic in polarized epithelial cells such as the vulval precursor cells and intestinal cells. Thought to act as a negative regulator of lin-12 activity in vulval precursor cells. May have a role in the internalization process from basolateral surface of polarized epithelial cells. In Caenorhabditis briggsae, this protein is Putative neurobeachin homolog.